Reading from the N-terminus, the 299-residue chain is Tyrosine recombinase XerC (299 aa).

Positions 1–85 (MERQLDAYCE…AVRGLYHYLN (85 aa)) constitute a Core-binding (CB) domain. Residues 106–285 (RLPKTLDTDR…DFQHLAAVYD (180 aa)) form the Tyr recombinase domain. Residues arginine 146, lysine 170, histidine 237, arginine 240, and histidine 263 contribute to the active site. Tyrosine 272 serves as the catalytic O-(3'-phospho-DNA)-tyrosine intermediate.

This sequence belongs to the 'phage' integrase family. XerC subfamily. Forms a cyclic heterotetrameric complex composed of two molecules of XerC and two molecules of XerD.

Its subcellular location is the cytoplasm. Its function is as follows. Site-specific tyrosine recombinase, which acts by catalyzing the cutting and rejoining of the recombining DNA molecules. The XerC-XerD complex is essential to convert dimers of the bacterial chromosome into monomers to permit their segregation at cell division. It also contributes to the segregational stability of plasmids. The sequence is that of Tyrosine recombinase XerC from Pseudomonas fluorescens (strain Pf0-1).